Here is a 501-residue protein sequence, read N- to C-terminus: MNKSTLNNPVFYVSAFVVFLLVIIGATLPNRFGAVAEKLFHFTTIHFGWFYLLAVFVFVVFLITLSLSKFGKIKLGATLTKPEYSFFTWIGMLFSAGFGAGLVFWGVAEPMSHFFKTPFPAVEAMSEEAARVAMGYAFFHWGVSQWSVFAIVGLVIAYLQFRKKRRGLISTSIQPIIGKNKFIADTVDSLAVIATVMGVATSLGLGILQMNGGLKSVFDVPTSIWVQMAIAGVMLITYLISSSTGLDRGIKWLSNINLGSLFIIIVFVFMAGPTVFILNTFVLGLGDYFSNFIGYSLRLTPYTGDTWVREWTIFYWAWSTAWSPFVGAFIARVSRGRSIRQYVLGVLVVSPAIACIWIAAFGGTAVYNDLMNGTSIAEAVNADIAVALFETYQHLPMTTILSILSIFLIFTFLVTSADSATYILGVMTSRGSLNPTLVTKIVWGLLITAIAVVLLLAGGLEALQTASLISALPFTVILLLMMASFTRMLSKGEKKAEQDKE.

A run of 12 helical transmembrane segments spans residues 9–29, 45–65, 86–106, 137–157, 190–210, 220–240, 258–278, 311–331, 343–363, 395–415, 441–461, and 465–485; these read PVFY…ATLP, IHFG…LITL, FFTW…VFWG, AFFH…LVIA, LAVI…ILQM, VPTS…TYLI, LGSL…VFIL, WTIF…AFIA, VLGV…AFGG, LPMT…FLVT, IVWG…GGLE, and TASL…MASF.

Belongs to the BCCT transporter (TC 2.A.15) family.

The protein localises to the cell inner membrane. Mediates the import of ectoine and hydroxyectoine, which function as osmotic and cold stress protectants. Also has minor uptake activities for the compatible solutes proline and glycine betaine. This chain is Ectoine/hydroxyectoine transporter, found in Virgibacillus pantothenticus.